A 342-amino-acid polypeptide reads, in one-letter code: Dihydroorotate dehydrogenase (quinone) (342 aa).

FMN-binding positions include 60 to 64 (AGLDK) and Thr84. Lys64 serves as a coordination point for substrate. Residue 109–113 (NRMGF) coordinates substrate. Residues Asn137 and Asn170 each coordinate FMN. Asn170 serves as a coordination point for substrate. Ser173 functions as the Nucleophile in the catalytic mechanism. Asn175 serves as a coordination point for substrate. Positions 215 and 243 each coordinate FMN. Position 244-245 (244-245 (NT)) interacts with substrate. Residues Gly266, Gly295, and 316-317 (YS) contribute to the FMN site.

This sequence belongs to the dihydroorotate dehydrogenase family. Type 2 subfamily. As to quaternary structure, monomer. FMN is required as a cofactor.

The protein resides in the cell membrane. It carries out the reaction (S)-dihydroorotate + a quinone = orotate + a quinol. The protein operates within pyrimidine metabolism; UMP biosynthesis via de novo pathway; orotate from (S)-dihydroorotate (quinone route): step 1/1. Catalyzes the conversion of dihydroorotate to orotate with quinone as electron acceptor. In Nitrosomonas eutropha (strain DSM 101675 / C91 / Nm57), this protein is Dihydroorotate dehydrogenase (quinone).